Consider the following 452-residue polypeptide: Putrescine hydroxycinnamoyltransferase (452 aa).

The active-site Proton acceptor is the His-151. Residues Pro-213 to Glu-234 are disordered. Residues Gly-222–Glu-234 are compositionally biased toward basic and acidic residues. Catalysis depends on Asp-398, which acts as the Proton acceptor.

Belongs to the plant acyltransferase family. As to expression, highly expressed in roots. Expressed at low levels in flowers.

Its function is as follows. Hydroxycinnamoyl transferase that catalyzes the transfer of an acyl from p-coumaryol-CoA to putrescine, to produce coumaroyl putrescine. Can use feruloyl-CoA, caffeoyl-CoA and sinapoyl-CoA as acyl donors. Seems to be able to transfer the acyl group from feruloyl-CoA to the acyl acceptors agmatine and spermidine. The protein is Putrescine hydroxycinnamoyltransferase of Oryza sativa subsp. japonica (Rice).